The chain runs to 617 residues: Manganese lipoxygenase (617 aa).

An N-terminal signal peptide occupies residues Met1–Ala17. Residues Gly23–Thr48 show a composition bias toward low complexity. Positions Gly23–Pro59 are disordered. N-linked (GlcNAc...) asparagine glycosylation is found at Asn109, Asn119, and Asn160. The Lipoxygenase domain maps to Leu122–Ile617. His293, His297, His479, and Asn483 together coordinate Mn(2+). N-linked (GlcNAc...) asparagine glycosylation occurs at Asn547. Ile617 contributes to the Mn(2+) binding site.

It belongs to the lipoxygenase family. Manganese lipoxygenase subfamily. Requires Mn(2+) as cofactor.

The protein resides in the secreted. The catalysed reaction is (9Z,12Z)-octadecadienoate + O2 = (9S)-hydroperoxy-(10E,12Z)-octadecadienoate. It catalyses the reaction (9Z,12Z)-octadecadienoate + O2 = (11S)-hydroperoxy-(9Z,12Z)-octadecadienoate. The enzyme catalyses (9Z,12Z)-octadecadienoate + O2 = (13R)-hydroperoxy-(9Z,11E)-octadecadienoate. It carries out the reaction (9Z,12Z,15Z)-octadecatrienoate + O2 = (9S)-hydroperoxy-(10E,12Z,15Z)-octadecatrienoate. The catalysed reaction is (9Z,12Z,15Z)-octadecatrienoate + O2 = (11R)-hydroperoxy-(9Z,12Z,15Z)-octadecatrienoate. It catalyses the reaction (9Z,12Z,15Z)-octadecatrienoate + O2 = (13R)-hydroperoxy-(9Z,11E,15Z)-octadecatrienoate. In terms of biological role, lipoxygenase that metabolizes linoleic and alpha-linolenic acids to 9S-, 11- and 13R-hydroperoxy fatty acids. At the end of lipoxygenation, the intermediate products 11S-HPODE and 13R-HPODE from linoleic acid are then transformed into 9S-HPODE as the final product. The intermediate product 11R-HPOTrE from alpha-linolenic acid is transformed into 9S-HPOTrE and 13R-HPOTrE as the final products. 9S-HPOTrE is further oxidized by the enzyme to 9,16-DiHOTrE as the end product. Also acts on gamma-linolenic acid producing 9-HOTrE(n-6) as the main metabolite. The chain is Manganese lipoxygenase from Nakataea oryzae (Rice stem rot fungus).